A 170-amino-acid polypeptide reads, in one-letter code: Ribosome maturation factor RimM (170 aa).

The PRC barrel domain maps to 98–170 (EGQYYWADLE…RIELDWDPDF (73 aa)).

This sequence belongs to the RimM family. Binds ribosomal protein uS19.

The protein localises to the cytoplasm. An accessory protein needed during the final step in the assembly of 30S ribosomal subunit, possibly for assembly of the head region. Essential for efficient processing of 16S rRNA. May be needed both before and after RbfA during the maturation of 16S rRNA. It has affinity for free ribosomal 30S subunits but not for 70S ribosomes. The chain is Ribosome maturation factor RimM from Alkalilimnicola ehrlichii (strain ATCC BAA-1101 / DSM 17681 / MLHE-1).